A 203-amino-acid chain; its full sequence is Recombination protein RecR (203 aa).

The C4-type zinc-finger motif lies at 56 to 71 (CAVCGNVSDNERCRIC). One can recognise a Toprim domain in the interval 79–179 (SVVCIVEEPK…TVTRIASGLP (101 aa)).

This sequence belongs to the RecR family.

Functionally, may play a role in DNA repair. It seems to be involved in an RecBC-independent recombinational process of DNA repair. It may act with RecF and RecO. This is Recombination protein RecR from Mycobacterium bovis (strain ATCC BAA-935 / AF2122/97).